We begin with the raw amino-acid sequence, 487 residues long: MAWQVSLPELEDRLQCPICLEVFKEPLMLQCGHSYCKGCLVSLSCHLDAELRCPVCRQAVDGSSSLPNVSLARVIEALRLPGDPEPKVCVHHRNPLSLFCEKDQELICGLCGLLGSHQHHPVTPVSTVYSRMKEELAALISELKQEQKKVDELIAKLVNNRTRIVNESDVFSWVIRREFQELHHLVDEEKARCLEGIGGHTRGLVASLDMQLEQAQGTRERLAQAECVLEQFGNEDHHKFIRKFHSMASRAEMPQARPLEGAFSPISFKPGLHQADIKLTVWKRLFRKVLPAPEPLKLDPATAHPLLELSKGNTVVQCGLLAQRRASQPERFDYSTCVLASRGFSCGRHYWEVVVGSKSDWRLGVIKGTASRKGKLNRSPEHGVWLIGLKEGRVYEAFACPRVPLPVAGHPHRIGLYLHYEQGELTFFDADRPDDLRPLYTFQADFQGKLYPILDTCWHERGSNSLPMVLPPPSGPGPLSPEQPTKL.

The RING-type zinc finger occupies 16 to 57 (CPICLEVFKEPLMLQCGHSYCKGCLVSLSCHLDAELRCPVCR). The B box-type zinc finger occupies 84 to 125 (PEPKVCVHHRNPLSLFCEKDQELICGLCGLLGSHQHHPVTPV). Zn(2+) is bound by residues C89, H92, C111, and H117. Coiled coils occupy residues 125 to 169 (VSTV…NESD) and 204 to 235 (LVASLDMQLEQAQGTRERLAQAECVLEQFGNE). Positions 276–475 (DIKLTVWKRL…LPMVLPPPSG (200 aa)) constitute a B30.2/SPRY domain. K373 bears the N6-acetyllysine mark. The interval 468–487 (MVLPPPSGPGPLSPEQPTKL) is disordered. Residues 469–481 (VLPPPSGPGPLSP) show a composition bias toward pro residues.

It belongs to the TRIM/RBCC family. As to quaternary structure, can form dimers and trimers. Interacts with several E2 ubiquitin-conjugating enzymes, including UBE2L6, UBE2E1, UBE2E3. No interaction with UBE2H. Interacts with BECN1. Interacts with SQSTM1. Interacts with NLRP3. Auto-ubiquitinated. In terms of processing, acetylated by EP300 and KAT2B. HDAC6 drives TRIM50 deacetylation. Acetylation antagonizes with TRIM50 ubiquitination.

Its subcellular location is the cytoplasm. The catalysed reaction is S-ubiquitinyl-[E2 ubiquitin-conjugating enzyme]-L-cysteine + [acceptor protein]-L-lysine = [E2 ubiquitin-conjugating enzyme]-L-cysteine + N(6)-ubiquitinyl-[acceptor protein]-L-lysine.. Functionally, E3 ubiquitin-protein ligase that ubiquitinates Beclin-1/BECN1 in a 'Lys-63'-dependent manner enhancing its binding to ULK1. In turn, promotes starvation-induced autophagy activation. Also interacts with p62/SQSTM1 protein and thereby induces the formation and the autophagy clearance of aggresome-associated polyubiquitinated proteins through HDAC6 interaction. Also promotes NLRP3 inflammasome activation by directly inducing NLRP3 oligomerization independent of its E3 ligase function. This chain is E3 ubiquitin-protein ligase TRIM50, found in Homo sapiens (Human).